The following is a 438-amino-acid chain: MAKPLVTIVGRPNVGKSTLFNKLAGKRVSIVEDTPGVTRDRIYAESEWVGKKFTIIDTGGIEPENNDIILTQMRRQAQIAIEMSDVIIFMVDGKQGLTDTDNEVAIMLRKSKKPIVLVVNKIDKNVEENNIYEFYNLGIGDPVSISSSQGLGIGDMLDEVVNKFKSEGEDEEEEEYIKIAFVGKPNVGKSSLTNRILGEERVIVSDIPGTTRDAIDSFLETDFGKLVLIDTAGLRRKSRIKEEIERYSAVRTMAAIERCDVCTLILDATEPISEQDERIIGYAHENNKAILVIVNKWDLIEKDDKTMENFKKNLEMKFSFMAYAPFLFISAKTGQRVHKVLSEIKKCYDNYSKRIATGVLNDVISNAVLMKEPPVVAFKRLKIFYVTQTDIKPPTFIFFVNNPELLHFSYRRYLENKLRQSFDFEGTGIKMIFKERKN.

2 EngA-type G domains span residues 4–168 and 177–352; these read PLVT…KSEG and IKIA…DNYS. Residues 10–17, 57–61, 120–123, 183–190, 230–234, and 295–298 contribute to the GTP site; these read GRPNVGKS, DTGGI, NKID, GKPNVGKS, DTAGL, and NKWD. The 85-residue stretch at 353–437 folds into the KH-like domain; it reads KRIATGVLND…GIKMIFKERK (85 aa).

The protein belongs to the TRAFAC class TrmE-Era-EngA-EngB-Septin-like GTPase superfamily. EngA (Der) GTPase family. As to quaternary structure, associates with the 50S ribosomal subunit.

GTPase that plays an essential role in the late steps of ribosome biogenesis. The polypeptide is GTPase Der (Clostridium acetobutylicum (strain ATCC 824 / DSM 792 / JCM 1419 / IAM 19013 / LMG 5710 / NBRC 13948 / NRRL B-527 / VKM B-1787 / 2291 / W)).